Here is a 786-residue protein sequence, read N- to C-terminus: MSYKNTNNSHLILFKLLLLLILYSADLTASSSCRSECGGCKCGGIAIPYPFGIGKGCYLEKSYEIECLNTSGKLVPFLSVISKEVVSIHLPGRQSFGSVRVRSPITSAGCSSDGKDSAPVMNLTDSPFFVSDINNLVGVGCSSKVSLEHIKQNMVGCELNCSTTNASDSNSIPFFDKTGCSFSYTFAQVCTGNKPEDMGCDGRGCCQASLPREPQQVIGIRIESNDGKSTTSGDCRVAFLTDEFFSLSKLTKPEQLHAKRYATLSLGWIMQTRNTSFVNSLACKIRKDTDTAYSNDQSIKCICDYTMSIISDIRYANCECNLGYKGNPYDSDGCRDIDECKENPKYCKETDTCVNFEGGYRCVGDKTKAIMIGAGTGFGVLVLVGGVWWLRKFLVKRRMAKRKKKFFKRNGGLLLQQELNTRQGVVEKARIFTSKELEKATENFSENRVLGHGGQGTVYKGMLVDGRTVAVKKSKVIDEDKLQEFINEVVILSQINHRHVVKLLGCCLETEVPILVYEFIINGNLFKHIHEEEADDYTMIWGMRLRIAVDIAGALSYLHSAASSPIYHRDIKSTNILLDEKYRAKVADFGTSRSVTIDQTHWTTVISGTVGYVDPEYYRSSQYTEKSDVYSFGVILAELITGDKPVIMVQNTQEIIALAEHFRVAMKERRLSDIMDARIRDDSKPEQVMAVANLAMKCLSSRGRNRPNMREVFTELERICTSPEDSQVQNRIDEEEEEDGVEEEEEVVTIVHRGDSWSIGVTAPASSIVASPPSSDVEPLNPLLTW.

Residues 1–30 (MSYKNTNNSHLILFKLLLLLILYSADLTAS) form the signal peptide. Topologically, residues 31–369 (SSCRSECGGC…YRCVGDKTKA (339 aa)) are extracellular. Residues asparagine 69, asparagine 122, asparagine 160, asparagine 165, and asparagine 274 are each glycosylated (N-linked (GlcNAc...) asparagine). The interval 301-362 (CICDYTMSII…CVNFEGGYRC (62 aa)) is atypical EGF-like. Disulfide bonds link cysteine 303–cysteine 318, cysteine 340–cysteine 353, and cysteine 347–cysteine 362. Residues 370–390 (IMIGAGTGFGVLVLVGGVWWL) traverse the membrane as a helical segment. The Cytoplasmic segment spans residues 391-786 (RKFLVKRRMA…VEPLNPLLTW (396 aa)). Position 433 is a phosphothreonine (threonine 433). Residues 444-719 (FSENRVLGHG…REVFTELERI (276 aa)) enclose the Protein kinase domain. Residues 450–458 (LGHGGQGTV) and lysine 472 contribute to the ATP site. At tyrosine 517 the chain carries Phosphotyrosine. Residue aspartate 570 is the Proton acceptor of the active site. 2 positions are modified to phosphothreonine: threonine 604 and threonine 609. Position 617 is a phosphotyrosine (tyrosine 617). Residues 766 to 775 (SSIVASPPSS) show a composition bias toward low complexity. A disordered region spans residues 766–786 (SSIVASPPSSDVEPLNPLLTW).

It belongs to the protein kinase superfamily. Ser/Thr protein kinase family.

It localises to the membrane. The catalysed reaction is L-seryl-[protein] + ATP = O-phospho-L-seryl-[protein] + ADP + H(+). It carries out the reaction L-threonyl-[protein] + ATP = O-phospho-L-threonyl-[protein] + ADP + H(+). Serine/threonine-protein kinase that may function as a signaling receptor of extracellular matrix component. In Arabidopsis thaliana (Mouse-ear cress), this protein is Wall-associated receptor kinase-like 17 (WAKL17).